We begin with the raw amino-acid sequence, 115 residues long: Alpha-endosulfine (115 aa).

Polar residues predominate over residues 1–10; sequence MSSENLSDTQ. Residues 1–27 are disordered; sequence MSSENLSDTQMEYEDEKQDSQEKNANL. Residue serine 65 is modified to Phosphoserine; by GWL. The segment at 77 to 115 is disordered; the sequence is NKQLPVAGPDKNLVTGDHIPTPQDLPQRRSSLVTSKLAG. The span at 104–115 shows a compositional bias: polar residues; it reads RRSSLVTSKLAG.

Belongs to the endosulfine family. Phosphorylation at Ser-65 by gwl during mitosis is essential for interaction with ppp2r2d (PR55-delta) and subsequent inactivation of PP2A.

The protein localises to the cytoplasm. In terms of biological role, protein phosphatase inhibitor that specifically inhibits protein phosphatase 2A (PP2A) during mitosis. When phosphorylated at Ser-67 during mitosis, specifically interacts with ppp2r2d (PR55-delta) and inhibits its activity, leading to inactivation of PP2A, an essential condition to keep cyclin-B1-CDK1 activity high during M phase. The chain is Alpha-endosulfine (ensa) from Salmo salar (Atlantic salmon).